The sequence spans 405 residues: uncharacterized protein (405 aa).

Disordered regions lie at residues 1–21 (MSKK…ESKT), 150–179 (IKDE…QEGP), and 285–405 (DDED…KSRS). The segment covering 7 to 16 (KNASPKNNSD) has biased composition (polar residues). 2 stretches are compositionally biased toward acidic residues: residues 312 to 331 (SDDE…DDEE) and 349 to 358 (DDEDDEEEGE). 2 stretches are compositionally biased toward basic residues: residues 365–374 (SSKKSSKKAS) and 390–405 (PKKK…KSRS).

This is an uncharacterized protein from Acanthamoeba polyphaga (Amoeba).